The primary structure comprises 418 residues: (+)-T-muurolol synthase ((2E,6E)-farnesyl diphosphate cyclizing) (418 aa).

Mg(2+)-binding residues include Asp-83 and Asp-88. The DDXXXD motif motif lies at 83 to 88; that stretch reads DDEYCD. Arg-179 provides a ligand contact to substrate. 2 residues coordinate Mg(2+): Asn-225 and Ser-229. Residue Lys-232 coordinates substrate. Glu-233 lines the Mg(2+) pocket. 312-313 lines the substrate pocket; that stretch reads RY. Positions 354–418 are disordered; sequence LPEPGSDGAD…QQSTWRREHR (65 aa). A compositionally biased stretch (polar residues) spans 402-412; sequence ASRSSGLQQST.

The protein belongs to the terpene synthase family. Mg(2+) is required as a cofactor.

The enzyme catalyses (2E,6E)-farnesyl diphosphate + H2O = (+)-T-muurolol + diphosphate. Its pathway is secondary metabolite biosynthesis; terpenoid biosynthesis. Functionally, catalyzes the conversion of (2E,6E)-farnesyl diphosphate (FPP) into (+)-T-muurolol via a 1,10-cyclization, which requires isomerization of FPP to nerolidyl diphosphate (NPP) and then abstraction of the pyrophosphate from intermediate NPP leading to a (E,Z)-germacradienyl (helminthogermacradienyl) cation. This is (+)-T-muurolol synthase ((2E,6E)-farnesyl diphosphate cyclizing) from Streptomyces clavuligerus.